The chain runs to 626 residues: SHC-transforming protein 4 (626 aa).

The segment at 1–185 (MRERSQDSQA…KQDGPPLQHL (185 aa)) is CH2. Disordered regions lie at residues 38–76 (ITSL…TVSS) and 119–182 (LQEN…GPPL). Residues 120–139 (QENQDQTPSRPASPESNLNR) show a composition bias toward polar residues. Residues 186-369 (LGNGLNYCVR…LVDGAPEDRD (184 aa)) form the PID domain. The interval 370–521 (HDYYNSIPGK…HIRQQLWDEE (152 aa)) is CH1. Tyr-422 is modified (phosphotyrosine). The SH2 domain maps to 522 to 613 (CFHGKLSRGA…GSEVRLKQPI (92 aa)).

In terms of assembly, interacts (via PID domain) with phosphorylated MUSK (via NPXY motif); undergoes tyrosine phosphorylation downstream of activated MUSK. Interacts with GRB2; the interaction is dependent of Tyr-422 phosphorylation and increased by EGF. Post-translationally, phosphorylated; the phosphorylation is enhanced by EGF. Phosphorylation at Tyr-422 is required for the interaction with GRB2. Expressed in both brain and skeletal muscle; widely expressed in brain namely olfactory bulb, cortex, hippocampus, striatum, thalamus, and brain stem (at protein level). Only expressed in melanomas. Weakly expressed in normal melanocytes and benign nevi. Highly expressed at the transition from radial growth phase to vertical growth phase and metastatic melanomas, when tumor cells acquire migratory competence and invasive potential.

It is found in the postsynaptic cell membrane. Functionally, activates both Ras-dependent and Ras-independent migratory pathways in melanomas. Contributes to the early phases of agrin-induced tyrosine phosphorylation of CHRNB1. The polypeptide is SHC-transforming protein 4 (Shc4) (Mus musculus (Mouse)).